The following is a 59-amino-acid chain: Small ribosomal subunit protein bS21A (59 aa).

It belongs to the bacterial ribosomal protein bS21 family.

The protein is Small ribosomal subunit protein bS21A of Gloeobacter violaceus (strain ATCC 29082 / PCC 7421).